The primary structure comprises 266 residues: Chorismate mutase (266 aa).

Residues 7 to 263 (MADSERALNL…EVEYLMQRLI (257 aa)) form the Chorismate mutase domain. Positions 77, 78, 144, 146, 147, and 150 each coordinate L-tyrosine. L-tryptophan-binding residues include N144, G146, and S147.

Homodimer.

The protein localises to the cytoplasm. It catalyses the reaction chorismate = prephenate. Its pathway is metabolic intermediate biosynthesis; prephenate biosynthesis; prephenate from chorismate: step 1/1. Each dimer has two allosteric binding sites that can bind the regulatory effectors tryptophan or tyrosine. Can bind either one tryptophan or one tyrosine, two tryptophan or two tyrosine or one tryptophan and one tyrosine, which differentially affect the catalytic activity. Activated by tryptophan and subject to feedback inhibition by tyrosine. In the presence of both tryptophan and tyrosine, the enzyme is in the activated state. Its function is as follows. Catalyzes the Claisen rearrangement of chorismate to prephenate. Acts at the first branch point in the aromatic amino acid pathway where it steers biosynthesis towards phenylalanine and tyrosine, and away from tryptophan. This is Chorismate mutase from Trichoderma parareesei (Filamentous fungus).